Reading from the N-terminus, the 321-residue chain is Leucine-rich repeat-containing protein 46 (321 aa).

LRR repeat units follow at residues 45–66 (ELQT…EGLQ), 67–88 (NLHS…ACIP), 89–110 (SLRF…LDLP), and 111–132 (CLQF…EFPQ). The LRRCT domain occupies 142–184 (NSCTNQDGYRELVTEALPLLLDLDGQPVVERWISDEEDEASSD). Serine 175 and serine 182 each carry phosphoserine. Residues 201-221 (LKELEQELSRHREHRQQTALT) are a coiled coil. Positions 235–321 (DLPLLPGVPM…TKTTAKRSKK (87 aa)) are disordered.

It localises to the cell projection. The protein resides in the cilium. Its subcellular location is the flagellum. Its function is as follows. Required for normal spermatogenesis and male fertility. Plays an important role in sperm flagellum biogenesis. The protein is Leucine-rich repeat-containing protein 46 (LRRC46) of Homo sapiens (Human).